The primary structure comprises 215 residues: Pyrrolidone-carboxylate peptidase (215 aa).

Active-site residues include Glu-81, Cys-144, and His-168.

Belongs to the peptidase C15 family. Homotetramer.

The protein localises to the cytoplasm. The enzyme catalyses Release of an N-terminal pyroglutamyl group from a polypeptide, the second amino acid generally not being Pro.. Removes 5-oxoproline from various penultimate amino acid residues except L-proline. The chain is Pyrrolidone-carboxylate peptidase (pcp) from Bacillus subtilis (strain 168).